Here is a 350-residue protein sequence, read N- to C-terminus: tRNA uridine(34) hydroxylase (350 aa).

Positions 146-240 constitute a Rhodanese domain; sequence DDPDALFIDM…YARKAREQGL (95 aa). Residue cysteine 200 is the Cysteine persulfide intermediate of the active site.

The protein belongs to the TrhO family.

The enzyme catalyses uridine(34) in tRNA + AH2 + O2 = 5-hydroxyuridine(34) in tRNA + A + H2O. Catalyzes oxygen-dependent 5-hydroxyuridine (ho5U) modification at position 34 in tRNAs. This is tRNA uridine(34) hydroxylase from Shigella dysenteriae serotype 1 (strain Sd197).